Here is a 155-residue protein sequence, read N- to C-terminus: Ribonuclease H (155 aa).

The region spanning 1–143 (MNQVEIYTDG…ADALANRGVD (143 aa)) is the RNase H type-1 domain. 4 residues coordinate Mg(2+): D9, E47, D69, and D135.

It belongs to the RNase H family. Monomer. Mg(2+) serves as cofactor.

The protein resides in the cytoplasm. The catalysed reaction is Endonucleolytic cleavage to 5'-phosphomonoester.. Endonuclease that specifically degrades the RNA of RNA-DNA hybrids. In Verminephrobacter eiseniae (strain EF01-2), this protein is Ribonuclease H.